The primary structure comprises 577 residues: Aspartate--tRNA ligase (577 aa).

Glutamate 171 provides a ligand contact to L-aspartate. Residues 195–198 (QLFK) form an aspartate region. Arginine 217 is a binding site for L-aspartate. ATP-binding positions include 217-219 (RDE) and glutamine 226. Histidine 437 serves as a coordination point for L-aspartate. Glutamate 472 is an ATP binding site. Arginine 479 contributes to the L-aspartate binding site. Position 524–527 (524–527 (GFDR)) interacts with ATP.

The protein belongs to the class-II aminoacyl-tRNA synthetase family. Type 1 subfamily. As to quaternary structure, homodimer.

Its subcellular location is the cytoplasm. The catalysed reaction is tRNA(Asp) + L-aspartate + ATP = L-aspartyl-tRNA(Asp) + AMP + diphosphate. In terms of biological role, catalyzes the attachment of L-aspartate to tRNA(Asp) in a two-step reaction: L-aspartate is first activated by ATP to form Asp-AMP and then transferred to the acceptor end of tRNA(Asp). In Deinococcus deserti (strain DSM 17065 / CIP 109153 / LMG 22923 / VCD115), this protein is Aspartate--tRNA ligase.